We begin with the raw amino-acid sequence, 237 residues long: Cysteine-rich venom protein DIS2 (237 aa).

The first 18 residues, 1 to 18 (MFVFILLSLAAVLQQSFG), serve as a signal peptide directing secretion. In terms of domain architecture, SCP spans 37–165 (VDKHNAFRRS…SYNYFYVCQY (129 aa)). 7 disulfide bridges follow: cysteine 74/cysteine 152, cysteine 91/cysteine 166, cysteine 147/cysteine 163, cysteine 185/cysteine 192, cysteine 188/cysteine 197, cysteine 201/cysteine 234, and cysteine 219/cysteine 232. The ShKT domain occupies 201-234 (CSREDVFMNCKSLVAQSNCQDDYIRKNCPATCFC).

Belongs to the CRISP family. As to expression, expressed by the venom gland.

Its subcellular location is the secreted. Its function is as follows. Weakly blocks contraction of smooth muscle elicited by high potassium-induced depolarization, but does not block caffeine-stimulated contraction. May target voltage-gated calcium channels on smooth muscle. The sequence is that of Cysteine-rich venom protein DIS2 from Dispholidus typus (Boomslang).